A 152-amino-acid polypeptide reads, in one-letter code: Transcriptional regulator MraZ (152 aa).

SpoVT-AbrB domains lie at 5–52 (ATMV…PLPE) and 81–124 (ASEC…DEQT).

It belongs to the MraZ family. In terms of assembly, forms oligomers.

Its subcellular location is the cytoplasm. The protein resides in the nucleoid. Functionally, negatively regulates its own expression and that of the subsequent genes in the proximal part of the division and cell wall (dcw) gene cluster. Acts by binding directly to DNA. May also regulate the expression of genes outside the dcw cluster. The protein is Transcriptional regulator MraZ of Yersinia pseudotuberculosis serotype O:1b (strain IP 31758).